Reading from the N-terminus, the 364-residue chain is tRNA (adenine(58)-N(1))-methyltransferase catalytic subunit trm61 (364 aa).

S-adenosyl-L-methionine is bound by residues 114-116 (SAS), glutamate 135, arginine 140, 167-168 (DV), and aspartate 186. Residues 280–309 (EQNLSSDAKVEDQDNDSMLGENKSSVSTET) are disordered.

Belongs to the class I-like SAM-binding methyltransferase superfamily. TRM61 family. In terms of assembly, heterotetramer; composed of two copies of TRM6 and two copies of TRM61.

The protein resides in the nucleus. The catalysed reaction is adenosine(58) in tRNA + S-adenosyl-L-methionine = N(1)-methyladenosine(58) in tRNA + S-adenosyl-L-homocysteine + H(+). Functionally, catalytic subunit of tRNA (adenine-N(1)-)-methyltransferase, which catalyzes the formation of N(1)-methyladenine at position 58 (m1A58) in initiator methionyl-tRNA. This is tRNA (adenine(58)-N(1))-methyltransferase catalytic subunit trm61 (cpd1) from Schizosaccharomyces pombe (strain 972 / ATCC 24843) (Fission yeast).